The sequence spans 396 residues: MFEHIKAAPADPILGLGEAFKSETRENKINLGIGVYKDAQGTTPIMHAVKEAEKRLFDKEKTKNYLTIDGIADYNEQTKALLFGKDSEVIQSNRARTVQSLGGTGALRIAAEFIKRQTKAQNVWISTPTWPNHNAIFNAVGMTIREYRYYDAERKALDWEHLLEDLSQASEGDVVLLHGCCHNPTGIDPTPEQWQELAALSAKNGWLPLFDFAYQGLANGLDEDAYGLRAFAANHKELLVASSFSKNFGLYNERVGAFTLVAENAEIASTSLTQVKSIIRTLYSNPASHGGATVATVLNDAQLRQEWENELTEMRERIKKMRHLFVQLLKEYGAEQDFSFIIEQNGMFSFSGLTGEQVDRLKNEFAIYAVRSGRINVAGITEDNIRYLCESIVKVL.

L-aspartate contacts are provided by Gly34, Trp130, and Asn183. Lys246 is subject to N6-(pyridoxal phosphate)lysine. Position 374 (Arg374) interacts with L-aspartate.

This sequence belongs to the class-I pyridoxal-phosphate-dependent aminotransferase family. As to quaternary structure, homodimer. The cofactor is pyridoxal 5'-phosphate.

The protein localises to the cytoplasm. The catalysed reaction is L-aspartate + 2-oxoglutarate = oxaloacetate + L-glutamate. In Haemophilus influenzae (strain ATCC 51907 / DSM 11121 / KW20 / Rd), this protein is Aspartate aminotransferase (aspC).